Here is a 68-residue protein sequence, read N- to C-terminus: MATALSGLAVRLSRSAAARSYGVFCKGLTRTLLIFFDLAWRLRINFPYLYIVASMMLNVRLQVHIEIH.

In terms of tissue distribution, expressed specifically in salivary glands (at protein level).

In Mus musculus (Mouse), this protein is Small integral membrane protein 10-like protein 3.